We begin with the raw amino-acid sequence, 143 residues long: Putative protein FPV235 (143 aa).

This chain is Putative protein FPV235, found in Vertebrata (FPV).